We begin with the raw amino-acid sequence, 642 residues long: MEIENIVANTVYIKARESGGQKKGKSKKWKNYLQFPHYTECLPLKTEIEVTYAFVVEKQPIGKLLFHEFCQATNSQYHQCCQFLTKVEEYETSDDDGQSRRDLASSIVSLLHSKPEDNPSGSQDEQEFWCSFLSDEVISTCITTADSATHDDEPRSDIFTEPYRLTCQYLTDAPFKEFAESMYFHRFLQWKWLEKRPVDKHTFRLYRVLGKGGFGEVCACQVRASGKMYALKKLEKKRVKKRHAETLSLNEKQILQRINSPFVVSLAYAYETKDALCLVLTLMNGGDLKFHLYNLMPGGFDEKRVQFYAAEITLGLQHLHSERILYRDLKPENILLDDFGHVRISDLGLAVEIKDNEPIKGRVGTVGYMAPEIVKNERYSYGVDWWGVGCLIYEMIEGKAPFRQRKEKVKREEVERRVREDQEKYSEKFSEAARTLCRGLLHKEPGFRLGCRRVGRPEDGAEEIRAHPFFNTADTVTGREPVPWKKMEAGKVTPPFCPDPRAVYAKDVLDIEQFSTVKGVRLDATDTQFYGKFNTGCVSIPWQSEMIETECFAELNTFHDEDGNVMWNLRPDGINMDERRNGTSKPGFFSRLFRKKNIEVTKSLHDLSHLGVEQQQPPKTSTQTPAVRSSRAASASGRTLVI.

Positions 1 to 202 (MEIENIVANT…LEKRPVDKHT (202 aa)) are N-terminal. In terms of domain architecture, RGS spans 52 to 188 (YAFVVEKQPI…AESMYFHRFL (137 aa)). The 268-residue stretch at 203–470 (FRLYRVLGKG…AEEIRAHPFF (268 aa)) folds into the Protein kinase domain. Residues 209-217 (LGKGGFGEV) and Lys232 each bind ATP. The active-site Proton acceptor is the Asp328. One can recognise an AGC-kinase C-terminal domain in the interval 480–545 (EPVPWKKMEA…GCVSIPWQSE (66 aa)). A disordered region spans residues 612-642 (VEQQQPPKTSTQTPAVRSSRAASASGRTLVI). Residues 614 to 636 (QQQPPKTSTQTPAVRSSRAASAS) are compositionally biased toward low complexity.

The protein belongs to the protein kinase superfamily. AGC Ser/Thr protein kinase family. GPRK subfamily.

The enzyme catalyses [G-protein-coupled receptor] + ATP = [G-protein-coupled receptor]-phosphate + ADP + H(+). Its function is as follows. Specifically phosphorylates the activated forms of G protein-coupled receptors. In Caenorhabditis elegans, this protein is G protein-coupled receptor kinase 1 (grk-1).